The following is a 286-amino-acid chain: DegV domain-containing protein SPs1668 (286 aa).

The DegV domain maps to 3-282 (FTIMTDSTAD…PNTLAVFVIG (280 aa)). Hexadecanoate-binding residues include Thr62 and Ser94.

May bind long-chain fatty acids, such as palmitate, and may play a role in lipid transport or fatty acid metabolism. In Streptococcus pyogenes serotype M3 (strain SSI-1), this protein is DegV domain-containing protein SPs1668.